A 74-amino-acid polypeptide reads, in one-letter code: MKLLGGLLLLFTATCLCNVDCDIYKKYPVVAIPCPIENIPVCGSDYITYGNKCKLCTEILRSNGKIQFLHEGHC.

An N-terminal signal peptide occupies residues 1-17; the sequence is MKLLGGLLLLFTATCLC. Residues 18 to 74 form the Kazal-like domain; that stretch reads NVDCDIYKKYPVVAIPCPIENIPVCGSDYITYGNKCKLCTEILRSNGKIQFLHEGHC. Cystine bridges form between C21–C56, C34–C53, and C42–C74.

The protein resides in the secreted. Probable serine protease inhibitor. The chain is Serine protease inhibitor Kazal-type 7 (Spink7) from Rattus norvegicus (Rat).